The following is a 302-amino-acid chain: Deoxyhypusine hydroxylase (302 aa).

Met1 bears the N-acetylmethionine mark. 5 HEAT-like PBS-type repeats span residues 54 to 80 (LKHELAYCLGQMRDARAIPVLADVLQD), 87 to 113 (VRHEAGEALGAIGNPEVLGLLKQYSTD), 175 to 201 (ERYRAMFALRNVGGKEAALALAEGLQC), 206 to 232 (FRHEVGYVLGQLQHEAAVPGLAATLAR), and 239 to 265 (VRHECAEALGAIARPACLAALREHIED). 3 residues coordinate Fe cation: His56, His89, and Glu90. Fe cation-binding residues include His208, His241, and Glu242.

Belongs to the deoxyhypusine hydroxylase family. Fe(2+) serves as cofactor.

The enzyme catalyses [eIF5A protein]-deoxyhypusine + AH2 + O2 = [eIF5A protein]-hypusine + A + H2O. It functions in the pathway protein modification; eIF5A hypusination. Functionally, catalyzes the hydroxylation of the N(6)-(4-aminobutyl)-L-lysine intermediate produced by deoxyhypusine synthase/DHPS on a critical lysine of the eukaryotic translation initiation factor 5A/eIF-5A. This is the second step of the post-translational modification of that lysine into an unusual amino acid residue named hypusine. Hypusination is unique to mature eIF-5A factor and is essential for its function. This chain is Deoxyhypusine hydroxylase, found in Mus musculus (Mouse).